Here is a 331-residue protein sequence, read N- to C-terminus: Ketol-acid reductoisomerase (NADP(+)) (331 aa).

Residues 2 to 182 (ARMYYDQDAN…GGTRAGILET (181 aa)) enclose the KARI N-terminal Rossmann domain. NADP(+) is bound by residues 25–28 (YGSQ), Ser-51, Ser-53, and 83–86 (DEVQ). His-108 is a catalytic residue. Gly-134 provides a ligand contact to NADP(+). One can recognise a KARI C-terminal knotted domain in the interval 183–328 (TFREETETDL…KDLRAMFSWL (146 aa)). 4 residues coordinate Mg(2+): Asp-191, Glu-195, Glu-227, and Glu-231. Ser-252 lines the substrate pocket.

The protein belongs to the ketol-acid reductoisomerase family. As to quaternary structure, homooctamer. Mg(2+) serves as cofactor.

It catalyses the reaction (2R)-2,3-dihydroxy-3-methylbutanoate + NADP(+) = (2S)-2-acetolactate + NADPH + H(+). The catalysed reaction is (2R,3R)-2,3-dihydroxy-3-methylpentanoate + NADP(+) = (S)-2-ethyl-2-hydroxy-3-oxobutanoate + NADPH + H(+). The protein operates within amino-acid biosynthesis; L-isoleucine biosynthesis; L-isoleucine from 2-oxobutanoate: step 2/4. It participates in amino-acid biosynthesis; L-valine biosynthesis; L-valine from pyruvate: step 2/4. In terms of biological role, involved in the biosynthesis of branched-chain amino acids (BCAA). Catalyzes an alkyl-migration followed by a ketol-acid reduction of (S)-2-acetolactate (S2AL) to yield (R)-2,3-dihydroxy-isovalerate. In the isomerase reaction, S2AL is rearranged via a Mg-dependent methyl migration to produce 3-hydroxy-3-methyl-2-ketobutyrate (HMKB). In the reductase reaction, this 2-ketoacid undergoes a metal-dependent reduction by NADPH to yield (R)-2,3-dihydroxy-isovalerate. In Synechocystis sp. (strain ATCC 27184 / PCC 6803 / Kazusa), this protein is Ketol-acid reductoisomerase (NADP(+)).